The following is a 460-amino-acid chain: Arginine biosynthesis bifunctional protein ArgJ, chloroplastic (460 aa).

The transit peptide at 1–26 (MYLSVPHYPSLKFTAFQSHKRNFRVF) directs the protein to the chloroplast. Substrate is bound by residues Thr-202, Lys-228, Thr-239, Glu-328, Asn-455, and Thr-460. Thr-239 acts as the Nucleophile in catalysis.

Belongs to the ArgJ family. As to quaternary structure, heterodimer of an alpha and a beta chain.

The protein resides in the plastid. It localises to the chloroplast. It carries out the reaction N(2)-acetyl-L-ornithine + L-glutamate = N-acetyl-L-glutamate + L-ornithine. It catalyses the reaction L-glutamate + acetyl-CoA = N-acetyl-L-glutamate + CoA + H(+). It participates in amino-acid biosynthesis; L-arginine biosynthesis; L-ornithine and N-acetyl-L-glutamate from L-glutamate and N(2)-acetyl-L-ornithine (cyclic): step 1/1. Its pathway is amino-acid biosynthesis; L-arginine biosynthesis; N(2)-acetyl-L-ornithine from L-glutamate: step 1/4. In terms of biological role, catalyzes two activities which are involved in the cyclic version of arginine biosynthesis: the synthesis of acetylglutamate from glutamate and acetyl-CoA, and of ornithine by transacetylation between acetylornithine and glutamate. The polypeptide is Arginine biosynthesis bifunctional protein ArgJ, chloroplastic (Citrullus lanatus (Watermelon)).